The following is a 169-amino-acid chain: UPF0316 protein Dde_2502 (169 aa).

The next 3 membrane-spanning stretches (helical) occupy residues 1 to 21 (MITA…LCDV), 38 to 58 (LAFS…SRVI), and 68 to 88 (LAFA…EGVF).

The protein belongs to the UPF0316 family.

Its subcellular location is the cell membrane. This is UPF0316 protein Dde_2502 from Oleidesulfovibrio alaskensis (strain ATCC BAA-1058 / DSM 17464 / G20) (Desulfovibrio alaskensis).